A 284-amino-acid chain; its full sequence is Tropomyosin alpha-3 chain (284 aa).

An N-acetylmethionine modification is found at Met-1. Positions 1–43 (MEAIKKKMQMLKLDKENALDRAEQAEAEQKQAEERSKQLEDEL) are disordered. Positions 1–284 (MEAIKKKMQM…DHALNDMTSI (284 aa)) form a coiled coil. Glu-2 is modified (N-acetylalanine). Residues 12–40 (KLDKENALDRAEQAEAEQKQAEERSKQLE) show a composition bias toward basic and acidic residues. A Phosphothreonine modification is found at Thr-53. Ser-61 and Ser-87 each carry phosphoserine. At Thr-108 the chain carries Phosphothreonine. Ser-206 and Ser-215 each carry phosphoserine. Leu-228 carries the N6-acetyllysine modification. Thr-252 is subject to Phosphothreonine. A Phosphotyrosine modification is found at Tyr-261. Position 271 is a phosphoserine (Ser-271). Thr-282 is subject to Phosphothreonine. The residue at position 283 (Ser-283) is a Phosphoserine.

The protein belongs to the tropomyosin family. As to quaternary structure, homodimer. Heterodimer of an alpha (TPM1, TPM3 or TPM4) and a beta (TPM2) chain. Interacts with TMOD1. Interacts with TNNT1.

It localises to the cytoplasm. It is found in the cytoskeleton. Binds to actin filaments in muscle and non-muscle cells. Plays a central role, in association with the troponin complex, in the calcium dependent regulation of vertebrate striated muscle contraction. Smooth muscle contraction is regulated by interaction with caldesmon. In non-muscle cells is implicated in stabilizing cytoskeleton actin filaments. The polypeptide is Tropomyosin alpha-3 chain (TPM3) (Bos taurus (Bovine)).